The chain runs to 365 residues: Chaperone protein DnaJ (365 aa).

One can recognise a J domain in the interval 4 to 70; sequence DYYKILGVDR…QKRRMYDQTG (67 aa). A CR-type zinc finger spans residues 139–220; sequence GTEKRIKYRR…CNGTGTVVVN (82 aa). Positions 152, 155, 168, 171, 194, 197, 208, and 211 each coordinate Zn(2+). CXXCXGXG motif repeat units lie at residues 152-159, 168-175, 194-201, and 208-215; these read CPDCNGTG, CPTCNGTG, CQTCGGRG, and CPRCNGTG.

The protein belongs to the DnaJ family. Homodimer. Zn(2+) is required as a cofactor.

Its subcellular location is the cytoplasm. Functionally, participates actively in the response to hyperosmotic and heat shock by preventing the aggregation of stress-denatured proteins and by disaggregating proteins, also in an autonomous, DnaK-independent fashion. Unfolded proteins bind initially to DnaJ; upon interaction with the DnaJ-bound protein, DnaK hydrolyzes its bound ATP, resulting in the formation of a stable complex. GrpE releases ADP from DnaK; ATP binding to DnaK triggers the release of the substrate protein, thus completing the reaction cycle. Several rounds of ATP-dependent interactions between DnaJ, DnaK and GrpE are required for fully efficient folding. Also involved, together with DnaK and GrpE, in the DNA replication of plasmids through activation of initiation proteins. The polypeptide is Chaperone protein DnaJ (Thermoplasma acidophilum (strain ATCC 25905 / DSM 1728 / JCM 9062 / NBRC 15155 / AMRC-C165)).